We begin with the raw amino-acid sequence, 104 residues long: Large ribosomal subunit protein uL23 (104 aa).

It belongs to the universal ribosomal protein uL23 family. In terms of assembly, part of the 50S ribosomal subunit. Contacts protein L29, and trigger factor when it is bound to the ribosome.

In terms of biological role, one of the early assembly proteins it binds 23S rRNA. One of the proteins that surrounds the polypeptide exit tunnel on the outside of the ribosome. Forms the main docking site for trigger factor binding to the ribosome. The chain is Large ribosomal subunit protein uL23 from Paraburkholderia phytofirmans (strain DSM 17436 / LMG 22146 / PsJN) (Burkholderia phytofirmans).